The following is a 189-amino-acid chain: Probable transcriptional regulator Rv1176c (189 aa).

This sequence belongs to the PadR family. As to quaternary structure, homodimer.

It localises to the cytoplasm. Its function is as follows. Probable transcriptional regulator that may help mitigate the effect of oxidative stress and help mycobacteria survive inside macrophages. Binds to its own promoter region. The polypeptide is Probable transcriptional regulator Rv1176c (Mycobacterium tuberculosis (strain ATCC 25618 / H37Rv)).